Reading from the N-terminus, the 110-residue chain is ATP synthase subunit c (110 aa).

Transmembrane regions (helical) follow at residues 4-24 (FFVI…VFAA), 37-57 (ATAG…AGMG), and 81-101 (FIVG…FVLI).

Belongs to the ATPase C chain family. F-type ATPases have 2 components, F(1) - the catalytic core - and F(0) - the membrane proton channel. F(1) has five subunits: alpha(3), beta(3), gamma(1), delta(1), epsilon(1). F(0) has three main subunits: a(1), b(2) and c(10-14). The alpha and beta chains form an alternating ring which encloses part of the gamma chain. F(1) is attached to F(0) by a central stalk formed by the gamma and epsilon chains, while a peripheral stalk is formed by the delta and b chains.

It is found in the cell inner membrane. Its function is as follows. F(1)F(0) ATP synthase produces ATP from ADP in the presence of a proton or sodium gradient. F-type ATPases consist of two structural domains, F(1) containing the extramembraneous catalytic core and F(0) containing the membrane proton channel, linked together by a central stalk and a peripheral stalk. During catalysis, ATP synthesis in the catalytic domain of F(1) is coupled via a rotary mechanism of the central stalk subunits to proton translocation. Functionally, key component of the F(0) channel; it plays a direct role in translocation across the membrane. A homomeric c-ring of between 10-14 subunits forms the central stalk rotor element with the F(1) delta and epsilon subunits. The sequence is that of ATP synthase subunit c from Thermodesulfovibrio yellowstonii (strain ATCC 51303 / DSM 11347 / YP87).